Consider the following 428-residue polypeptide: uncharacterized protein (428 aa).

The region spanning Lys-241–Glu-351 is the Glutaredoxin domain. The segment covering Glu-386–Val-401 has biased composition (acidic residues). The tract at residues Glu-386–Arg-405 is disordered.

This is an uncharacterized protein from Arabidopsis thaliana (Mouse-ear cress).